We begin with the raw amino-acid sequence, 316 residues long: D-alanine--D-alanine ligase (316 aa).

One can recognise an ATP-grasp domain in the interval 112 to 310 (KTALKAHGLP…FGKLCRWLVE (199 aa)). Position 139-189 (139-189 (MATPYVVKPNNEGSSVGVYLVNEAANGPPHLSDDMPDEVMVETYAPGRELT)) interacts with ATP. Mg(2+)-binding residues include Asp261, Glu277, and Asn279.

The protein belongs to the D-alanine--D-alanine ligase family. It depends on Mg(2+) as a cofactor. Requires Mn(2+) as cofactor.

The protein localises to the cytoplasm. It catalyses the reaction 2 D-alanine + ATP = D-alanyl-D-alanine + ADP + phosphate + H(+). The protein operates within cell wall biogenesis; peptidoglycan biosynthesis. Its function is as follows. Cell wall formation. The chain is D-alanine--D-alanine ligase from Jannaschia sp. (strain CCS1).